A 488-amino-acid chain; its full sequence is Ribulose bisphosphate carboxylase large chain (488 aa).

Positions 127 and 177 each coordinate substrate. Catalysis depends on lysine 179, which acts as the Proton acceptor. Substrate is bound at residue lysine 181. Positions 205, 207, and 208 each coordinate Mg(2+). At lysine 205 the chain carries N6-carboxylysine. The Proton acceptor role is filled by histidine 297. Positions 298, 330, and 382 each coordinate substrate.

It belongs to the RuBisCO large chain family. Type I subfamily. In terms of assembly, heterohexadecamer of 8 large chains and 8 small chains. Mg(2+) is required as a cofactor.

The protein resides in the plastid. Its subcellular location is the chloroplast. It catalyses the reaction 2 (2R)-3-phosphoglycerate + 2 H(+) = D-ribulose 1,5-bisphosphate + CO2 + H2O. It carries out the reaction D-ribulose 1,5-bisphosphate + O2 = 2-phosphoglycolate + (2R)-3-phosphoglycerate + 2 H(+). In terms of biological role, ruBisCO catalyzes two reactions: the carboxylation of D-ribulose 1,5-bisphosphate, the primary event in carbon dioxide fixation, as well as the oxidative fragmentation of the pentose substrate in the photorespiration process. Both reactions occur simultaneously and in competition at the same active site. The sequence is that of Ribulose bisphosphate carboxylase large chain from Gracilaria tenuistipitata var. liui (Red alga).